The sequence spans 637 residues: Proton myo-inositol cotransporter (637 aa).

The Cytoplasmic segment spans residues 1–65; sequence MSRKASEDVE…AARRQFQRDE (65 aa). Residue S6 is modified to Phosphoserine. A disordered region spans residues 16 to 38; it reads LSSLMGERRRRQPEPGAPGGERS. S44 and S47 each carry phosphoserine. The chain crosses the membrane as a helical span at residues 66–86; sequence TPAFVYAAAAFSALGGFLFGY. At 87–114 the chain is on the extracellular side; it reads DTGVVSGAMLLLRRQMRLGAMWQELLVS. The helical transmembrane segment at 115-135 threads the bilayer; that stretch reads GAVGAAAVAALAGGALNGALG. Residues 136–137 are Cytoplasmic-facing; it reads RR. Residues 138-158 form a helical membrane-spanning segment; it reads SAILLASALCTVGSAVLAAAA. Residues 159–167 lie on the Extracellular side of the membrane; sequence NKETLLAGR. Residues 168–188 form a helical membrane-spanning segment; the sequence is LVVGLGIGIASMTVPVYIAEV. At 189–201 the chain is on the cytoplasmic side; sequence SPPNLRGRLVTIN. A helical membrane pass occupies residues 202 to 222; the sequence is TLFITGGQFFASVVDGAFSYL. Over 223 to 228 the chain is Extracellular; that stretch reads QKDGWR. Residues 229-249 traverse the membrane as a helical segment; sequence YMLGLAAIPAVIQFLGFLFLP. The Cytoplasmic segment spans residues 250 to 313; the sequence is ESPRWLIQKG…RMLSYPPTRR (64 aa). Residues 314 to 334 traverse the membrane as a helical segment; sequence ALAVGCGLQMFQQLSGINTIM. Residues 335 to 352 are Extracellular-facing; the sequence is YYSATILQMSGVEDDRLA. Residues 353 to 373 form a helical membrane-spanning segment; that stretch reads IWLASITAFTNFIFTLVGVWL. Residues 374 to 382 are Cytoplasmic-facing; sequence VEKVGRRKL. A helical membrane pass occupies residues 383 to 403; that stretch reads TFGSLAGTTVALTILALGFLL. Topologically, residues 404–497 are extracellular; sequence SAQVSPRVTF…SFCPTPYSWT (94 aa). 3 N-linked (GlcNAc...) asparagine glycosylation sites follow: N422, N447, and N474. The chain crosses the membrane as a helical span at residues 498–518; that stretch reads ALVGLVLYLVFFAPGMGPMPW. Residues 519-538 lie on the Cytoplasmic side of the membrane; it reads TVNSEIYPLWARSTGNACSA. Residues 539–559 form a helical membrane-spanning segment; the sequence is GINWIFNVLVSLTFLHTAEYL. The Extracellular segment spans residues 560–562; it reads TYY. Residues 563–583 traverse the membrane as a helical segment; that stretch reads GAFFLYAGFAAVGLLFVYGCL. Topologically, residues 584 to 637 are cytoplasmic; the sequence is PETKGKKLEEIESLFDHRLCTCGTADSDEGRYIEYIRVKGSNYHLSDNDASDVE. S629 and S634 each carry phosphoserine.

The protein belongs to the major facilitator superfamily. Sugar transporter (TC 2.A.1.1) family.

The protein localises to the cell membrane. It carries out the reaction myo-inositol(out) + H(+)(out) = myo-inositol(in) + H(+)(in). H(+)-myo-inositol cotransporter. Can also transport related stereoisomers. In Rattus norvegicus (Rat), this protein is Proton myo-inositol cotransporter.